Reading from the N-terminus, the 364-residue chain is Thebaine 6-O-demethylase (364 aa).

Positions 214–314 (GTQAMRMNYY…RLSIATFHDP (101 aa)) constitute a Fe2OG dioxygenase domain. Tyr223 contacts 2-oxoglutarate. Positions 238, 240, and 295 each coordinate Fe cation. 2-oxoglutarate contacts are provided by Arg305 and Ser307.

Belongs to the iron/ascorbate-dependent oxidoreductase family. It depends on L-ascorbate as a cofactor. Fe cation serves as cofactor. In terms of tissue distribution, mainly expressed in stems and leaves and, to a lower extent, in capsules and roots.

The enzyme catalyses thebaine + 2-oxoglutarate + O2 = neopinone + formaldehyde + succinate + CO2. The catalysed reaction is oripavine + 2-oxoglutarate + O2 = neomorphinone + formaldehyde + succinate + CO2. It catalyses the reaction (S)-canadine + S-adenosyl-L-methionine = (S)-cis-N-methylcanadine + S-adenosyl-L-homocysteine. It carries out the reaction thebaine + 2-oxoglutarate + O2 = 6-O-demethylthebaine + formaldehyde + succinate + CO2 + H(+). The protein operates within alkaloid biosynthesis; morphine biosynthesis. With respect to regulation, moderate substrate inhibition. Not inhibited in vitro by acylcyclohexanediones. Non-heme dioxygenase involved in biosynthesis of morphinan-type benzylisoquinoline and opiate alkaloids natural products. Mediates the conversion of thebaine to neopinone. Also catalyzes, with lower efficiency, the 6-O-demethylation of oripavine to neomorphinone, which is converted spontaneously to morphinone. Supports dealkylation reactions such as O,O-demethylenation in the metabolism of protopine, benzo[c]phenanthridine, and rhoeadine alkaloids; cleaves a methylenedioxy bridge leaving two hydroxyl groups. Catalyzes the O-demethylation of methylenedioxy bridges on protopine alkaloids such as allocryptopine. No activity with (S)-reticuline, salutaridine, papaverine, (S)-corytuberine, (S)-scoulerine, pavine, noscapine or codeine. This Papaver somniferum (Opium poppy) protein is Thebaine 6-O-demethylase.